Here is a 593-residue protein sequence, read N- to C-terminus: ATP-dependent lipid A-core flippase (593 aa).

Transmembrane regions (helical) follow at residues 33 to 55 (YIFL…YGFG), 67 to 87 (ILML…VGSF), 146 to 166 (AIIT…VMFV), 169 to 189 (WQLS…ISII), 258 to 278 (VIQI…AIFG), and 284 to 304 (GSSW…AAIL). Positions 38 to 319 (ADASMIYLIN…LTKVNVVIQK (282 aa)) constitute an ABC transmembrane type-1 domain. Positions 351–585 (VTIKDLSFAF…GGLYTGSINR (235 aa)) constitute an ABC transporter domain. 383 to 390 (GKSGSGKT) contributes to the ATP binding site.

The protein belongs to the ABC transporter superfamily. Lipid exporter (TC 3.A.1.106) family. In terms of assembly, homodimer.

It is found in the cell membrane. The enzyme catalyses ATP + H2O + lipid A-core oligosaccharideSide 1 = ADP + phosphate + lipid A-core oligosaccharideSide 2.. Involved in lipopolysaccharide (LPS) biosynthesis. Translocates lipid A-core from the inner to the outer leaflet of the inner membrane. Transmembrane domains (TMD) form a pore in the inner membrane and the ATP-binding domain (NBD) is responsible for energy generation. The chain is ATP-dependent lipid A-core flippase from Francisella novicida.